Consider the following 455-residue polypeptide: Notoamide E oxidase notB' (455 aa).

Residues 11–31 (PAILSPADLTVIIVGLGIAGL) traverse the membrane as a helical segment. FAD contacts are provided by glutamate 48 and glycine 61. N-linked (GlcNAc...) asparagine glycosylation occurs at asparagine 75. An FAD-binding site is contributed by arginine 121. Active-site residues include arginine 199 and tyrosine 229. Residues aspartate 324 and glycine 337 each contribute to the FAD site.

It belongs to the paxM FAD-dependent monooxygenase family. The cofactor is FAD.

The protein resides in the membrane. It carries out the reaction notoamide E + NADPH + O2 + H(+) = notoamide C + NADP(+) + H2O. It catalyses the reaction notoamide E + NADPH + O2 + H(+) = notoamide D + NADP(+) + H2O. It participates in alkaloid biosynthesis. Its function is as follows. FAD-dependent monooxygenase; part of the gene cluster that mediates the biosynthesis of notoamide, a fungal indole alkaloid that belongs to a family of natural products containing a characteristic bicyclo[2.2.2]diazaoctane core. The first step of notoamide biosynthesis involves coupling of L-proline and L-tryptophan by the bimodular NRPS notE', to produce cyclo-L-tryptophan-L-proline called brevianamide F. The reverse prenyltransferase notF' then acts as a deoxybrevianamide E synthase and converts brevianamide F to deoxybrevianamide E via reverse prenylation at C-2 of the indole ring leading to the bicyclo[2.2.2]diazaoctane core. Deoxybrevianamide E is further hydroxylated at C-6 of the indole ring, likely catalyzed by the cytochrome P450 monooxygenase notG', to yield 6-hydroxy-deoxybrevianamide E. 6-hydroxy-deoxybrevianamide E is a specific substrate of the prenyltransferase notC' for normal prenylation at C-7 to produce 6-hydroxy-7-prenyl-deoxybrevianamide, also called notoamide S. As the proposed pivotal branching point in notoamide biosynthesis, notoamide S can be diverted to notoamide E through an oxidative pyran ring closure putatively catalyzed by either notH' cytochrome P450 monooxygenase or the notD' FAD-linked oxidoreductase. This step would be followed by an indole 2,3-epoxidation-initiated pinacol-like rearrangement catalyzed by the notB' FAD-dependent monooxygenase leading to the formation of notoamide C and notoamide D. On the other hand notoamide S is converted to notoamide T by notH' (or notD'), a bifunctional oxidase that also functions as the intramolecular Diels-Alderase responsible for generation of (-)-notoamide T. To generate antipodal (+)-notoaminide T, notH (or notD) in Aspergillus strain MF297-2 is expected to catalyze a Diels-Alder reaction leading to the opposite stereochemistry. The remaining oxidoreductase notD' (or notH') likely catalyzes the oxidative pyran ring formation to yield (-)-stephacidin A. The FAD-dependent monooxygenase notI' is highly similar to notB' and is predicted to catalyze a similar conversion from (-)-stephacidin A to (+)-notoamide B via the 2,3-epoxidation of (-)-stephacidin A followed by a pinacol-type rearrangement. Finally, it remains unclear which enzyme could be responsible for the final hydroxylation steps leading to notoamide A and sclerotiamide. The polypeptide is Notoamide E oxidase notB' (Aspergillus versicolor).